A 525-amino-acid polypeptide reads, in one-letter code: GMP synthase [glutamine-hydrolyzing] (525 aa).

One can recognise a Glutamine amidotransferase type-1 domain in the interval 8–207 (KILILDFGSQ…ALDICECEAN (200 aa)). The Nucleophile role is filled by C85. Active-site residues include H181 and E183. The 193-residue stretch at 208–400 (WKPTSIIEDA…LGLPYDMLYR (193 aa)) folds into the GMPS ATP-PPase domain. 235-241 (SGGVDSS) provides a ligand contact to ATP.

Homodimer.

The catalysed reaction is XMP + L-glutamine + ATP + H2O = GMP + L-glutamate + AMP + diphosphate + 2 H(+). It participates in purine metabolism; GMP biosynthesis; GMP from XMP (L-Gln route): step 1/1. Functionally, catalyzes the synthesis of GMP from XMP. The protein is GMP synthase [glutamine-hydrolyzing] of Shewanella sediminis (strain HAW-EB3).